A 259-amino-acid polypeptide reads, in one-letter code: Protein snail homolog Sna (259 aa).

Residues 1–20 (MPRSFLVKKHFSASKKPNYS) form an SNAG domain region. A disordered region spans residues 71–113 (DYKKSPISPSSSDDSSKPLDLTSFSSEDEGGKTSDPPSPASSA). C2H2-type zinc fingers lie at residues 119-141 (FQCN…KQLH), 150-172 (FSCK…IRSH), 176-198 (CVCK…IRTH), 204-226 (FSCT…LQTH), and 232-255 (YQCK…ETGC).

Belongs to the snail C2H2-type zinc-finger protein family. Interacts (via SNAG domain) with limd1 (via LIM domains), wtip (via LIM domains) and ajuba (via LIM domains). Interacts with elp3; the interaction inhibits snai1 ubiquitination and promotes snai1 stability. Post-translationally, ubiquitinated. Maternal expression is nearly completely restricted to the vegetal hemisphere. Zygotic expression begins in the dorsal marginal zone just before gastrulation (stage 9), and is almost completely absent in the animal hemisphere. At mid-gastrula (stage 11-11.5), expression begins in the ectoderm in an arc surrounding the prospective neural plate. From stage 12, anterior expression is down-regulated, while levels are increased in the prospective neural crest.

The protein localises to the nucleus. Functionally, transcriptional repressor. Acts upstream of snai2/slug, zic5 and other neural crest markers in the specification of the neural crest and neural crest migration. Involved in embryonic mesoderm formation. The protein is Protein snail homolog Sna (snai1) of Xenopus laevis (African clawed frog).